The sequence spans 500 residues: Cholesterol 24-hydroxylase (500 aa).

A helical membrane pass occupies residues 3 to 23 (PGLLLLGSAVLLAFGLCCTFV). Residue Cys437 coordinates heme.

This sequence belongs to the cytochrome P450 family. It depends on heme as a cofactor. Expressed in brain. The mRNA was broadly distributed with higher levels in gray matter zones and lower levels in regions rich in white matter. Not detected in fetal sample but its expression increases linearly with age.

It is found in the endoplasmic reticulum membrane. It localises to the microsome membrane. The protein resides in the postsynapse. The protein localises to the presynapse. Its subcellular location is the cell projection. It is found in the dendrite. It catalyses the reaction cholesterol + reduced [NADPH--hemoprotein reductase] + O2 = (24S)-hydroxycholesterol + oxidized [NADPH--hemoprotein reductase] + H2O + H(+). It carries out the reaction cholestanol + reduced [NADPH--hemoprotein reductase] + O2 = (24S)-hydroxycholestanol + oxidized [NADPH--hemoprotein reductase] + H2O + H(+). The enzyme catalyses 7-dehydrocholesterol + reduced [NADPH--hemoprotein reductase] + O2 = cholesta-5,7-dien-3beta,24S-diol + oxidized [NADPH--hemoprotein reductase] + H2O + H(+). The catalysed reaction is 7-dehydrocholesterol + reduced [NADPH--hemoprotein reductase] + O2 = cholesta-5,7-dien-3beta,25-diol + oxidized [NADPH--hemoprotein reductase] + H2O + H(+). It catalyses the reaction desmosterol + reduced [NADPH--hemoprotein reductase] + O2 = (24Z),26-hydroxydesmosterol + oxidized [NADPH--hemoprotein reductase] + H2O + H(+). It carries out the reaction desmosterol + reduced [NADPH--hemoprotein reductase] + O2 = (24S)-25-epoxycholesterol + oxidized [NADPH--hemoprotein reductase] + H2O + H(+). The enzyme catalyses 4beta-hydroxycholesterol + reduced [NADPH--hemoprotein reductase] + O2 = 4beta,24S-dihydroxycholesterol + oxidized [NADPH--hemoprotein reductase] + H2O + H(+). The catalysed reaction is (24S)-hydroxycholesterol + reduced [NADPH--hemoprotein reductase] + O2 = (24S,25R)-24,26-dihydroxycholesterol + oxidized [NADPH--hemoprotein reductase] + H2O + H(+). It catalyses the reaction (24S)-hydroxycholesterol + reduced [NADPH--hemoprotein reductase] + O2 = 24S,25-dihydroxycholesterol + oxidized [NADPH--hemoprotein reductase] + H2O + H(+). It carries out the reaction 7alpha-hydroxycholesterol + reduced [NADPH--hemoprotein reductase] + O2 = (24S)-7alpha-dihydroxycholesterol + oxidized [NADPH--hemoprotein reductase] + H2O + H(+). The enzyme catalyses progesterone + reduced [NADPH--hemoprotein reductase] + O2 = 17alpha-hydroxyprogesterone + oxidized [NADPH--hemoprotein reductase] + H2O + H(+). The catalysed reaction is testosterone + reduced [NADPH--hemoprotein reductase] + O2 = 16beta,17beta-dihydroxyandrost-4-en-3-one + oxidized [NADPH--hemoprotein reductase] + H2O + H(+). It catalyses the reaction testosterone + reduced [NADPH--hemoprotein reductase] + O2 = 2-hydroxytestosterone + oxidized [NADPH--hemoprotein reductase] + H2O + H(+). It carries out the reaction testosterone + reduced [NADPH--hemoprotein reductase] + O2 = 6beta,17beta-dihydroxyandrost-4-en-3-one + oxidized [NADPH--hemoprotein reductase] + H2O + H(+). It functions in the pathway steroid metabolism; cholesterol degradation. It participates in lipid metabolism; C21-steroid hormone metabolism. In terms of biological role, P450 monooxygenase that plays a major role in cholesterol homeostasis in the brain. Primarily catalyzes the hydroxylation (with S stereochemistry) at C-24 of cholesterol side chain, triggering cholesterol diffusion out of neurons and its further degradation. By promoting constant cholesterol elimination in neurons, may activate the mevalonate pathway and coordinate the synthesis of new cholesterol and nonsterol isoprenoids involved in synaptic activity and learning. Further hydroxylates cholesterol derivatives and hormone steroids on both the ring and side chain of these molecules, converting them into active oxysterols involved in lipid signaling and biosynthesis. Acts as an epoxidase converting cholesta-5,24-dien-3beta-ol/desmosterol into (24S),25-epoxycholesterol, an abundant lipid ligand of nuclear NR1H2 and NR1H3 receptors shown to promote neurogenesis in developing brain. May also catalyze the oxidative metabolism of xenobiotics, such as clotrimazole. The sequence is that of Cholesterol 24-hydroxylase from Homo sapiens (Human).